The sequence spans 493 residues: Transcript termination protein OPG145 (493 aa).

The 157-residue stretch at 100-256 folds into the Helicase ATP-binding domain; sequence MIKLKRPLYI…NSIINIAKLS (157 aa). 113–120 serves as a coordination point for ATP; the sequence is LACGFGKT. Residues 206–209 carry the DESH box motif; sequence DESH.

The protein belongs to the helicase family. Poxviruses subfamily. In terms of assembly, interacts with OPG087. Might be part of a transcription complex composed at least of OPG087, OPG110, and OPG145.

It localises to the virion. In terms of biological role, DNA helicase which seems to act as a postreplicative transcription termination factor. Involved in ATP-dependent release of nascent RNA. Forms a stable complex with single-stranded DNA, and to a lesser extent RNA. The polypeptide is Transcript termination protein OPG145 (OPG145) (Variola virus (isolate Human/India/Ind3/1967) (VARV)).